The chain runs to 308 residues: N-acetyl-gamma-glutamyl-phosphate reductase (308 aa).

Cys117 is a catalytic residue.

The protein belongs to the NAGSA dehydrogenase family. Type 2 subfamily.

It localises to the cytoplasm. It carries out the reaction N-acetyl-L-glutamate 5-semialdehyde + phosphate + NADP(+) = N-acetyl-L-glutamyl 5-phosphate + NADPH + H(+). It functions in the pathway amino-acid biosynthesis; L-arginine biosynthesis; N(2)-acetyl-L-ornithine from L-glutamate: step 3/4. Functionally, catalyzes the NADPH-dependent reduction of N-acetyl-5-glutamyl phosphate to yield N-acetyl-L-glutamate 5-semialdehyde. This chain is N-acetyl-gamma-glutamyl-phosphate reductase, found in Sinorhizobium fredii (strain NBRC 101917 / NGR234).